Consider the following 505-residue polypeptide: Phase 1 flagellin (505 aa).

This sequence belongs to the bacterial flagellin family.

The protein resides in the secreted. It is found in the bacterial flagellum. Its function is as follows. Flagellin is the subunit protein which polymerizes to form the filaments of bacterial flagella. This is Phase 1 flagellin (fliC) from Salmonella naestved.